A 439-amino-acid polypeptide reads, in one-letter code: Xylose isomerase (439 aa).

Residues His-98 and Asp-101 contribute to the active site. The Mg(2+) site is built by Glu-229, Glu-265, His-268, Asp-293, Asp-304, Asp-306, and Asp-335.

It belongs to the xylose isomerase family. As to quaternary structure, homotetramer. Mg(2+) serves as cofactor.

The protein resides in the cytoplasm. It catalyses the reaction alpha-D-xylose = alpha-D-xylulofuranose. In terms of biological role, involved in D-xylose catabolism. The sequence is that of Xylose isomerase (xylA) from Staphylococcus xylosus.